Reading from the N-terminus, the 104-residue chain is Nucleoid-associated protein Moth_0028 (104 aa).

Belongs to the YbaB/EbfC family. Homodimer.

It localises to the cytoplasm. The protein localises to the nucleoid. Functionally, binds to DNA and alters its conformation. May be involved in regulation of gene expression, nucleoid organization and DNA protection. The polypeptide is Nucleoid-associated protein Moth_0028 (Moorella thermoacetica (strain ATCC 39073 / JCM 9320)).